Here is a 237-residue protein sequence, read N- to C-terminus: E3 ubiquitin-protein ligase RNF166 (237 aa).

An RING-type zinc finger spans residues 33–73; sequence CPICLEVYHRPVAIGSCGHTFCGECLQPCLQVPSPLCPLCR. Residues cysteine 98, cysteine 101, histidine 113, and cysteine 117 each contribute to the Zn(2+) site. The segment at 98 to 117 adopts a C2HC RNF-type zinc-finger fold; it reads CRGCNKKVTLAKMRVHISSC. Residues 221–237 form the UIM domain; the sequence is DEEAAFQAALALSLSEN.

Its subcellular location is the cytoplasm. The catalysed reaction is S-ubiquitinyl-[E2 ubiquitin-conjugating enzyme]-L-cysteine + [acceptor protein]-L-lysine = [E2 ubiquitin-conjugating enzyme]-L-cysteine + N(6)-ubiquitinyl-[acceptor protein]-L-lysine.. Its pathway is protein modification; protein ubiquitination. Functionally, E3 ubiquitin-protein ligase that promotes the ubiquitination of different substrates. In turn, participates in different biological processes including interferon production or autophagy. Plays a role in the activation of RNA virus-induced interferon-beta production by promoting the ubiquitination of TRAF3 and TRAF6. Also plays a role in the early recruitment of autophagy adapters to bacteria. Mediates 'Lys-29' and 'Lys-33'-linked ubiquitination of SQSTM1 leading to xenophagic targeting of bacteria and inhibition of their replication. This is E3 ubiquitin-protein ligase RNF166 (RNF166) from Homo sapiens (Human).